Consider the following 318-residue polypeptide: MNGDHMVLGSSMTDEKAIILVIILLLLCLVAIAGNCFITAALGMEWVLQRMLLPCDKLLVSLGASRFCPQWVVMGKTTYVFLYPTAFPYNPVLRFLAFQWDLLNAATLWFSTWLSVFYCVKIATFTHPVFLWLKHKLSEWVPWMLFSSVGLSSFTTILFFIGNHRVYQSYLRNHLQPWNVTGNSIWSYCEKFYLFPLKMITWTMPTAVFFICMILLITSLGRHMKKALLTNSGFRDPSVQAHIKAMLALLSFAMLFISYFLSLVFSAAGIFPPLDFKFWVWESVIYLCAAVHPIILLFSNRRLRAVLKRCRSSRCGTP.

The Extracellular segment spans residues methionine 1–valine 7. A helical transmembrane segment spans residues leucine 8–cysteine 28. Residues leucine 29–alanine 40 are Cytoplasmic-facing. The helical transmembrane segment at alanine 41–serine 61 threads the bilayer. The Extracellular portion of the chain corresponds to leucine 62 to proline 88. Residues tyrosine 89–tryptophan 109 form a helical membrane-spanning segment. At phenylalanine 110–proline 128 the chain is on the cytoplasmic side. A helical membrane pass occupies residues valine 129 to valine 149. The Extracellular portion of the chain corresponds to glycine 150 to asparagine 183. A glycan (N-linked (GlcNAc...) asparagine) is linked at asparagine 179. Residues serine 184–methionine 204 form a helical membrane-spanning segment. The Cytoplasmic segment spans residues proline 205–phenylalanine 234. Residues arginine 235–leucine 255 traverse the membrane as a helical segment. The Extracellular segment spans residues phenylalanine 256–valine 264. Residues phenylalanine 265–isoleucine 285 form a helical membrane-spanning segment. The Cytoplasmic segment spans residues tyrosine 286–proline 318.

Belongs to the G-protein coupled receptor T2R family.

The protein resides in the membrane. Its function is as follows. Receptor that may play a role in the perception of bitterness and is gustducin-linked. May play a role in sensing the chemical composition of the gastrointestinal content. The activity of this receptor may stimulate alpha gustducin, mediate PLC-beta-2 activation and lead to the gating of TRPM5. This is Taste receptor type 2 member 60 (TAS2R60) from Pongo pygmaeus (Bornean orangutan).